Here is a 341-residue protein sequence, read N- to C-terminus: Holliday junction branch migration complex subunit RuvB (341 aa).

The segment at 1–180 (MAKSHTLNPE…FGIQLRLDYY (180 aa)) is large ATPase domain (RuvB-L). Positions 19, 20, 61, 64, 65, 66, 170, 180, and 217 each coordinate ATP. Mg(2+) is bound at residue Thr65. The small ATPAse domain (RuvB-S) stretch occupies residues 181 to 251 (NDEEMKQIVL…LCLKAFEKMG (71 aa)). The tract at residues 254–341 (DLGLDGMDRQ…VHHGQDPTLF (88 aa)) is head domain (RuvB-H). DNA-binding residues include Arg309 and Arg314.

Belongs to the RuvB family. Homohexamer. Forms an RuvA(8)-RuvB(12)-Holliday junction (HJ) complex. HJ DNA is sandwiched between 2 RuvA tetramers; dsDNA enters through RuvA and exits via RuvB. An RuvB hexamer assembles on each DNA strand where it exits the tetramer. Each RuvB hexamer is contacted by two RuvA subunits (via domain III) on 2 adjacent RuvB subunits; this complex drives branch migration. In the full resolvosome a probable DNA-RuvA(4)-RuvB(12)-RuvC(2) complex forms which resolves the HJ.

The protein resides in the cytoplasm. It carries out the reaction ATP + H2O = ADP + phosphate + H(+). Functionally, the RuvA-RuvB-RuvC complex processes Holliday junction (HJ) DNA during genetic recombination and DNA repair, while the RuvA-RuvB complex plays an important role in the rescue of blocked DNA replication forks via replication fork reversal (RFR). RuvA specifically binds to HJ cruciform DNA, conferring on it an open structure. The RuvB hexamer acts as an ATP-dependent pump, pulling dsDNA into and through the RuvAB complex. RuvB forms 2 homohexamers on either side of HJ DNA bound by 1 or 2 RuvA tetramers; 4 subunits per hexamer contact DNA at a time. Coordinated motions by a converter formed by DNA-disengaged RuvB subunits stimulates ATP hydrolysis and nucleotide exchange. Immobilization of the converter enables RuvB to convert the ATP-contained energy into a lever motion, pulling 2 nucleotides of DNA out of the RuvA tetramer per ATP hydrolyzed, thus driving DNA branch migration. The RuvB motors rotate together with the DNA substrate, which together with the progressing nucleotide cycle form the mechanistic basis for DNA recombination by continuous HJ branch migration. Branch migration allows RuvC to scan DNA until it finds its consensus sequence, where it cleaves and resolves cruciform DNA. In Leptospira interrogans serogroup Icterohaemorrhagiae serovar copenhageni (strain Fiocruz L1-130), this protein is Holliday junction branch migration complex subunit RuvB.